Reading from the N-terminus, the 192-residue chain is Small ribosomal subunit protein uS5 (192 aa).

One can recognise an S5 DRBM domain in the interval 22 to 85 (LVDKLVTINR…DRAKRAMIRV (64 aa)).

Belongs to the universal ribosomal protein uS5 family. In terms of assembly, part of the 30S ribosomal subunit. Contacts proteins S4 and S8.

With S4 and S12 plays an important role in translational accuracy. Functionally, located at the back of the 30S subunit body where it stabilizes the conformation of the head with respect to the body. The sequence is that of Small ribosomal subunit protein uS5 from Gluconacetobacter diazotrophicus (strain ATCC 49037 / DSM 5601 / CCUG 37298 / CIP 103539 / LMG 7603 / PAl5).